Consider the following 475-residue polypeptide: Sulfate adenylyltransferase subunit 1 (475 aa).

A tr-type G domain is found at K25–R239. The G1 stretch occupies residues G34–S41. Position 34 to 41 (G34 to S41) interacts with GTP. A G2 region spans residues G92 to D96. The tract at residues D113–G116 is G3. GTP contacts are provided by residues D113 to H117 and N168 to D171. Positions N168 to D171 are G4. A G5 region spans residues S206–L208.

It belongs to the TRAFAC class translation factor GTPase superfamily. Classic translation factor GTPase family. CysN/NodQ subfamily. As to quaternary structure, heterodimer composed of CysD, the smaller subunit, and CysN.

The enzyme catalyses sulfate + ATP + H(+) = adenosine 5'-phosphosulfate + diphosphate. It participates in sulfur metabolism; hydrogen sulfide biosynthesis; sulfite from sulfate: step 1/3. With CysD forms the ATP sulfurylase (ATPS) that catalyzes the adenylation of sulfate producing adenosine 5'-phosphosulfate (APS) and diphosphate, the first enzymatic step in sulfur assimilation pathway. APS synthesis involves the formation of a high-energy phosphoric-sulfuric acid anhydride bond driven by GTP hydrolysis by CysN coupled to ATP hydrolysis by CysD. The sequence is that of Sulfate adenylyltransferase subunit 1 from Shigella flexneri.